A 214-amino-acid polypeptide reads, in one-letter code: Urease accessory protein UreG (214 aa).

23–30 (GPVGSGKT) provides a ligand contact to GTP.

This sequence belongs to the SIMIBI class G3E GTPase family. UreG subfamily. In terms of assembly, homodimer. UreD, UreF and UreG form a complex that acts as a GTP-hydrolysis-dependent molecular chaperone, activating the urease apoprotein by helping to assemble the nickel containing metallocenter of UreC. The UreE protein probably delivers the nickel.

It localises to the cytoplasm. Its function is as follows. Facilitates the functional incorporation of the urease nickel metallocenter. This process requires GTP hydrolysis, probably effectuated by UreG. This chain is Urease accessory protein UreG, found in Bordetella pertussis (strain Tohama I / ATCC BAA-589 / NCTC 13251).